Here is a 214-residue protein sequence, read N- to C-terminus: Orotate phosphoribosyltransferase (214 aa).

5-phospho-alpha-D-ribose 1-diphosphate-binding positions include Arg-125, Lys-126, Lys-129, His-131, and 151–159 (EDTSTTGNS). 2 residues coordinate orotate: Thr-155 and Arg-183.

The protein belongs to the purine/pyrimidine phosphoribosyltransferase family. PyrE subfamily. Homodimer. Mg(2+) serves as cofactor.

The catalysed reaction is orotidine 5'-phosphate + diphosphate = orotate + 5-phospho-alpha-D-ribose 1-diphosphate. Its pathway is pyrimidine metabolism; UMP biosynthesis via de novo pathway; UMP from orotate: step 1/2. Functionally, catalyzes the transfer of a ribosyl phosphate group from 5-phosphoribose 1-diphosphate to orotate, leading to the formation of orotidine monophosphate (OMP). This chain is Orotate phosphoribosyltransferase, found in Tropheryma whipplei (strain Twist) (Whipple's bacillus).